We begin with the raw amino-acid sequence, 317 residues long: Apolipoprotein E (317 aa).

Positions 1–18 are cleaved as a signal peptide; it reads MKVLWVALVITLLAGCQA. Repeat copies occupy residues 80–101, 102–123, 124–145, 146–167, 168–189, 190–211, 212–233, and 234–255. The tract at residues 80–255 is 8 X 22 AA approximate tandem repeats; sequence VLMDETMKEV…HLEEMREQLD (176 aa). Methionine 143 is subject to Methionine sulfoxide. Residues 158 to 168 form an LDL and other lipoprotein receptors binding region; the sequence is HLRKLRKRLLR. 162–165 is a binding site for heparin; it reads LRKR. The lipid-binding and lipoprotein association stretch occupies residues 210–290; it reads AATVGTLASQ…SWFEPLVEDM (81 aa). A heparin-binding site is contributed by 229-236; it reads HQKLRGRV. Residues 266-317 form a homooligomerization region; it reads TQMRLQAEAFQARLKSWFEPLVEDMQRQWAGLVEKVQLAMATSSTSAPSENH. Residues 278–290 form a specificity for association with VLDL region; it reads RLKSWFEPLVEDM.

It belongs to the apolipoprotein A1/A4/E family. Homotetramer. May interact with ABCA1; functionally associated with ABCA1 in the biogenesis of HDLs. May interact with APP/A4 amyloid-beta peptide; the interaction is extremely stable in vitro but its physiological significance is unclear. May interact with MAPT. May interact with MAP2. In the cerebrospinal fluid, interacts with secreted SORL1. Interacts with PMEL; this allows the loading of PMEL luminal fragment on ILVs to induce fibril nucleation. APOE exists as multiple glycosylated and sialylated glycoforms within cells and in plasma. The extent of glycosylation and sialylation are tissue and context specific. Post-translationally, glycated in plasma VLDL. In terms of processing, phosphorylated by FAM20C in the extracellular medium.

The protein localises to the secreted. It localises to the extracellular space. Its subcellular location is the extracellular matrix. It is found in the extracellular vesicle. The protein resides in the endosome. The protein localises to the multivesicular body. Functionally, APOE is an apolipoprotein, a protein associating with lipid particles, that mainly functions in lipoprotein-mediated lipid transport between organs via the plasma and interstitial fluids. APOE is a core component of plasma lipoproteins and is involved in their production, conversion and clearance. Apolipoproteins are amphipathic molecules that interact both with lipids of the lipoprotein particle core and the aqueous environment of the plasma. As such, APOE associates with chylomicrons, chylomicron remnants, very low density lipoproteins (VLDL) and intermediate density lipoproteins (IDL) but shows a preferential binding to high-density lipoproteins (HDL). It also binds a wide range of cellular receptors including the LDL receptor/LDLR and the very low-density lipoprotein receptor/VLDLR that mediate the cellular uptake of the APOE-containing lipoprotein particles. Finally, APOE also has a heparin-binding activity and binds heparan-sulfate proteoglycans on the surface of cells, a property that supports the capture and the receptor-mediated uptake of APOE-containing lipoproteins by cells. The polypeptide is Apolipoprotein E (APOE) (Physeter macrocephalus (Sperm whale)).